The following is a 402-amino-acid chain: NADH-quinone oxidoreductase subunit D (402 aa).

The protein belongs to the complex I 49 kDa subunit family. As to quaternary structure, NDH-1 is composed of 14 different subunits. Subunits NuoB, C, D, E, F, and G constitute the peripheral sector of the complex.

The protein resides in the cell inner membrane. The catalysed reaction is a quinone + NADH + 5 H(+)(in) = a quinol + NAD(+) + 4 H(+)(out). NDH-1 shuttles electrons from NADH, via FMN and iron-sulfur (Fe-S) centers, to quinones in the respiratory chain. The immediate electron acceptor for the enzyme in this species is believed to be ubiquinone. Couples the redox reaction to proton translocation (for every two electrons transferred, four hydrogen ions are translocated across the cytoplasmic membrane), and thus conserves the redox energy in a proton gradient. The protein is NADH-quinone oxidoreductase subunit D of Nitrobacter winogradskyi (strain ATCC 25391 / DSM 10237 / CIP 104748 / NCIMB 11846 / Nb-255).